We begin with the raw amino-acid sequence, 170 residues long: Acetyl-CoA decarbonylase/synthase complex subunit epsilon 1 (170 aa).

It belongs to the CdhB family. As to quaternary structure, heterotetramer of two alpha and two epsilon subunits. The ACDS complex is made up of alpha, epsilon, beta, gamma and delta subunits with a probable stoichiometry of (alpha(2)epsilon(2))(4)-beta(8)-(gamma(1)delta(1))(8).

The protein operates within one-carbon metabolism; methanogenesis from acetate. Part of a complex that catalyzes the reversible cleavage of acetyl-CoA, allowing growth on acetate as sole source of carbon and energy. The alpha-epsilon subcomponent functions as a carbon monoxide dehydrogenase. The precise role of the epsilon subunit is unclear; it may have a stabilizing role within the alpha(2)epsilon(2) component and/or be involved in electron transfer to FAD during a potential FAD-mediated CO oxidation. The polypeptide is Acetyl-CoA decarbonylase/synthase complex subunit epsilon 1 (cdhB1) (Methanosarcina thermophila).